The sequence spans 480 residues: Adenosylhomocysteinase (480 aa).

Positions 63, 142, and 203 each coordinate substrate. Residue 204–206 participates in NAD(+) binding; it reads TTT. Residues Lys-233 and Asp-237 each coordinate substrate. Residues Asn-238, 267 to 272, Glu-290, Asn-325, 346 to 348, and Asn-394 contribute to the NAD(+) site; these read GYGDVG and IGH.

The protein belongs to the adenosylhomocysteinase family. Requires NAD(+) as cofactor.

The protein localises to the cytoplasm. The catalysed reaction is S-adenosyl-L-homocysteine + H2O = L-homocysteine + adenosine. Its pathway is amino-acid biosynthesis; L-homocysteine biosynthesis; L-homocysteine from S-adenosyl-L-homocysteine: step 1/1. In terms of biological role, may play a key role in the regulation of the intracellular concentration of adenosylhomocysteine. The chain is Adenosylhomocysteinase from Xylella fastidiosa (strain Temecula1 / ATCC 700964).